The sequence spans 513 residues: ATP synthase subunit alpha (513 aa).

Residue 169 to 176 coordinates ATP; that stretch reads GDRQTGKT.

Belongs to the ATPase alpha/beta chains family. F-type ATPases have 2 components, CF(1) - the catalytic core - and CF(0) - the membrane proton channel. CF(1) has five subunits: alpha(3), beta(3), gamma(1), delta(1), epsilon(1). CF(0) has three main subunits: a(1), b(2) and c(9-12). The alpha and beta chains form an alternating ring which encloses part of the gamma chain. CF(1) is attached to CF(0) by a central stalk formed by the gamma and epsilon chains, while a peripheral stalk is formed by the delta and b chains.

The protein resides in the cell inner membrane. The enzyme catalyses ATP + H2O + 4 H(+)(in) = ADP + phosphate + 5 H(+)(out). In terms of biological role, produces ATP from ADP in the presence of a proton gradient across the membrane. The alpha chain is a regulatory subunit. This Methylobacillus flagellatus (strain ATCC 51484 / DSM 6875 / VKM B-1610 / KT) protein is ATP synthase subunit alpha.